A 55-amino-acid polypeptide reads, in one-letter code: Mitochondrial import receptor subunit TOM7 homolog (55 aa).

Residues 1 to 20 (MVKLSKEAKQRLQQLFKGSQ) are Cytoplasmic-facing. A helical membrane pass occupies residues 21–36 (FAIRWGFIPLVIYLGF). At 37–55 (KRGADPGMPEPTVLSLLWG) the chain is on the mitochondrial intermembrane side.

Belongs to the Tom7 family. In terms of assembly, forms part of the preprotein translocase complex of the outer mitochondrial membrane (TOM complex) which consists of at least 7 different proteins (TOMM5, TOMM6, TOMM7, TOMM20, TOMM22, TOMM40 and TOMM70).

The protein resides in the mitochondrion outer membrane. In terms of biological role, required for assembly and stability of the TOM complex. Positive regulator of PRKN translocation to damaged mitochondria. Acts probably by stabilizing PINK1 on the outer membrane of depolarized mitochondria. The chain is Mitochondrial import receptor subunit TOM7 homolog (TOMM7) from Homo sapiens (Human).